Reading from the N-terminus, the 189-residue chain is Peptidyl-tRNA hydrolase (189 aa).

Tyr-16 is a binding site for tRNA. The active-site Proton acceptor is His-21. TRNA contacts are provided by Phe-67, Asn-69, and Asn-115.

The protein belongs to the PTH family. Monomer.

It is found in the cytoplasm. It catalyses the reaction an N-acyl-L-alpha-aminoacyl-tRNA + H2O = an N-acyl-L-amino acid + a tRNA + H(+). In terms of biological role, hydrolyzes ribosome-free peptidyl-tRNAs (with 1 or more amino acids incorporated), which drop off the ribosome during protein synthesis, or as a result of ribosome stalling. Functionally, catalyzes the release of premature peptidyl moieties from peptidyl-tRNA molecules trapped in stalled 50S ribosomal subunits, and thus maintains levels of free tRNAs and 50S ribosomes. In Legionella pneumophila (strain Corby), this protein is Peptidyl-tRNA hydrolase.